Consider the following 302-residue polypeptide: Protoheme IX farnesyltransferase (302 aa).

The next 9 membrane-spanning stretches (helical) occupy residues 26–46 (VVVLMVFTAIVGMFLASPGQV), 48–68 (WVALTVGSLGIALAAGSAAAL), 98–118 (VLGFSSLLGVAGLGMLALWIN), 120–140 (LTAALTFASLIGYALVYTLYL), 148–168 (IVIGGAAGAAPPLLGWTAVTG), 174–194 (ALLLFLIVFVWTPPHFWALAV), 221–241 (ILLYTVLLLAVSLLPWATFMG), 244–264 (LYLAAAVGLGGWYLMLNVRLL), and 280–300 (IIYLFGLFAALLVDRQLPVWL).

The protein belongs to the UbiA prenyltransferase family. Protoheme IX farnesyltransferase subfamily.

It is found in the cell inner membrane. It catalyses the reaction heme b + (2E,6E)-farnesyl diphosphate + H2O = Fe(II)-heme o + diphosphate. The protein operates within porphyrin-containing compound metabolism; heme O biosynthesis; heme O from protoheme: step 1/1. Functionally, converts heme B (protoheme IX) to heme O by substitution of the vinyl group on carbon 2 of heme B porphyrin ring with a hydroxyethyl farnesyl side group. This chain is Protoheme IX farnesyltransferase, found in Alkalilimnicola ehrlichii (strain ATCC BAA-1101 / DSM 17681 / MLHE-1).